A 109-amino-acid chain; its full sequence is Probable cytochrome b-c1 complex subunit 7 (109 aa).

The protein belongs to the UQCRB/QCR7 family. In terms of assembly, component of the ubiquinol-cytochrome c oxidoreductase (cytochrome b-c1 complex, complex III, CIII), a multisubunit enzyme composed of 3 respiratory subunits cytochrome b, cytochrome c1 and Rieske protein, 2 core protein subunits, and additional low-molecular weight protein subunits. The complex exists as an obligatory dimer and forms supercomplexes (SCs) in the inner mitochondrial membrane with cytochrome c oxidase (complex IV, CIV).

It is found in the mitochondrion inner membrane. Component of the ubiquinol-cytochrome c oxidoreductase, a multisubunit transmembrane complex that is part of the mitochondrial electron transport chain which drives oxidative phosphorylation. The respiratory chain contains 3 multisubunit complexes succinate dehydrogenase (complex II, CII), ubiquinol-cytochrome c oxidoreductase (cytochrome b-c1 complex, complex III, CIII) and cytochrome c oxidase (complex IV, CIV), that cooperate to transfer electrons derived from NADH and succinate to molecular oxygen, creating an electrochemical gradient over the inner membrane that drives transmembrane transport and the ATP synthase. The cytochrome b-c1 complex catalyzes electron transfer from ubiquinol to cytochrome c, linking this redox reaction to translocation of protons across the mitochondrial inner membrane, with protons being carried across the membrane as hydrogens on the quinol. In the process called Q cycle, 2 protons are consumed from the matrix, 4 protons are released into the intermembrane space and 2 electrons are passed to cytochrome c. The protein is Probable cytochrome b-c1 complex subunit 7 of Dictyostelium discoideum (Social amoeba).